The chain runs to 189 residues: MGLLDAKVSNRNVLVTSVDNVMNWARLSSLWPMGFGLACCAIEMMATNASNYDLERFGIFPRSSPRQSDLMIVAGTVTMKMAERVVTLYEQMPEPRYVLSMGSCSNCGGPYWDHGYHVLKGVDRVIPVDVYVPGCPPRPEALIGGLMKIQELIRMEGLGISREEALKKLAEKSVDAQQVLDQTRKAAIA.

Residues C39, C40, C104, and C135 each contribute to the [4Fe-4S] cluster site.

Belongs to the complex I 20 kDa subunit family. In terms of assembly, NDH-1 is composed of 14 different subunits. Subunits NuoB, C, D, E, F, and G constitute the peripheral sector of the complex. It depends on [4Fe-4S] cluster as a cofactor.

Its subcellular location is the cell inner membrane. It carries out the reaction a quinone + NADH + 5 H(+)(in) = a quinol + NAD(+) + 4 H(+)(out). NDH-1 shuttles electrons from NADH, via FMN and iron-sulfur (Fe-S) centers, to quinones in the respiratory chain. The immediate electron acceptor for the enzyme in this species is believed to be a menaquinone. Couples the redox reaction to proton translocation (for every two electrons transferred, four hydrogen ions are translocated across the cytoplasmic membrane), and thus conserves the redox energy in a proton gradient. This Chlorobaculum parvum (strain DSM 263 / NCIMB 8327) (Chlorobium vibrioforme subsp. thiosulfatophilum) protein is NADH-quinone oxidoreductase subunit B.